Here is a 127-residue protein sequence, read N- to C-terminus: Fluoride-specific ion channel FluC (127 aa).

Helical transmembrane passes span 4-24 (TLLA…QLGV), 35-55 (LGTL…LAFF), 71-91 (TGLC…IMFL), and 103-123 (VLLN…LVTW). Na(+) contacts are provided by G75 and T78.

It belongs to the fluoride channel Fluc/FEX (TC 1.A.43) family.

The protein localises to the cell inner membrane. It carries out the reaction fluoride(in) = fluoride(out). With respect to regulation, na(+) is not transported, but it plays an essential structural role and its presence is essential for fluoride channel function. Its function is as follows. Fluoride-specific ion channel. Important for reducing fluoride concentration in the cell, thus reducing its toxicity. The chain is Fluoride-specific ion channel FluC from Pectobacterium carotovorum subsp. carotovorum (strain PC1).